Here is a 527-residue protein sequence, read N- to C-terminus: 4-alpha-glucanotransferase (527 aa).

This sequence belongs to the disproportionating enzyme family.

Its subcellular location is the cytoplasm. It carries out the reaction Transfers a segment of a (1-&gt;4)-alpha-D-glucan to a new position in an acceptor, which may be glucose or a (1-&gt;4)-alpha-D-glucan.. This Chlamydia trachomatis serovar D (strain ATCC VR-885 / DSM 19411 / UW-3/Cx) protein is 4-alpha-glucanotransferase (malQ).